A 1588-amino-acid chain; its full sequence is Pentafunctional AROM polypeptide (1588 aa).

The segment at 1-392 (MVQLAKVPIL…YGDSAQFVSD (392 aa)) is 3-dehydroquinate synthase. Residues 43–45 (DTN), 78–81 (ETSK), 109–111 (GGV), and D114 each bind NAD(+). R125 contacts 7-phospho-2-dehydro-3-deoxy-D-arabino-heptonate. 134 to 135 (TS) contacts NAD(+). 7-phospho-2-dehydro-3-deoxy-D-arabino-heptonate-binding residues include D141 and K147. Residue K156 participates in NAD(+) binding. N157 provides a ligand contact to 7-phospho-2-dehydro-3-deoxy-D-arabino-heptonate. NAD(+)-binding positions include 174–177 (WLET) and N185. E189 lines the Zn(2+) pocket. 7-phospho-2-dehydro-3-deoxy-D-arabino-heptonate is bound by residues 189–192 (EVIK) and K258. The Proton acceptor; for 3-dehydroquinate synthase activity role is filled by E268. Residues 272 to 276 (RNLLN) and H279 each bind 7-phospho-2-dehydro-3-deoxy-D-arabino-heptonate. H279 is a Zn(2+) binding site. H283 (proton acceptor; for 3-dehydroquinate synthase activity) is an active-site residue. H295 and K364 together coordinate 7-phospho-2-dehydro-3-deoxy-D-arabino-heptonate. H295 contacts Zn(2+). The EPSP synthase stretch occupies residues 405 to 871 (VYPFKDIPAD…WDVLHSELGA (467 aa)). C853 acts as the For EPSP synthase activity in catalysis. Residues 890 to 1080 (SVVIIGMRAA…IPSGRSAFVC (191 aa)) form a shikimate kinase region. 895–902 (GMRAAGKT) is a binding site for ATP. Positions 1081–1293 (LTFDDLTEQT…AAPGQLTVAQ (213 aa)) are 3-dehydroquinase. H1198 serves as the catalytic Proton acceptor; for 3-dehydroquinate dehydratase activity. K1227 (schiff-base intermediate with substrate; for 3-dehydroquinate dehydratase activity) is an active-site residue. The interval 1306–1588 (PKELFVVGKP…KAIFDAVTKE (283 aa)) is shikimate dehydrogenase.

The protein in the N-terminal section; belongs to the sugar phosphate cyclases superfamily. Dehydroquinate synthase family. This sequence in the 2nd section; belongs to the EPSP synthase family. In the 3rd section; belongs to the shikimate kinase family. It in the 4th section; belongs to the type-I 3-dehydroquinase family. The protein in the C-terminal section; belongs to the shikimate dehydrogenase family. Homodimer. It depends on Zn(2+) as a cofactor.

The protein localises to the cytoplasm. It catalyses the reaction 7-phospho-2-dehydro-3-deoxy-D-arabino-heptonate = 3-dehydroquinate + phosphate. The catalysed reaction is 3-dehydroquinate = 3-dehydroshikimate + H2O. The enzyme catalyses shikimate + NADP(+) = 3-dehydroshikimate + NADPH + H(+). It carries out the reaction shikimate + ATP = 3-phosphoshikimate + ADP + H(+). It catalyses the reaction 3-phosphoshikimate + phosphoenolpyruvate = 5-O-(1-carboxyvinyl)-3-phosphoshikimate + phosphate. Its pathway is metabolic intermediate biosynthesis; chorismate biosynthesis; chorismate from D-erythrose 4-phosphate and phosphoenolpyruvate: step 2/7. It functions in the pathway metabolic intermediate biosynthesis; chorismate biosynthesis; chorismate from D-erythrose 4-phosphate and phosphoenolpyruvate: step 3/7. It participates in metabolic intermediate biosynthesis; chorismate biosynthesis; chorismate from D-erythrose 4-phosphate and phosphoenolpyruvate: step 4/7. The protein operates within metabolic intermediate biosynthesis; chorismate biosynthesis; chorismate from D-erythrose 4-phosphate and phosphoenolpyruvate: step 5/7. Its pathway is metabolic intermediate biosynthesis; chorismate biosynthesis; chorismate from D-erythrose 4-phosphate and phosphoenolpyruvate: step 6/7. The AROM polypeptide catalyzes 5 consecutive enzymatic reactions in prechorismate polyaromatic amino acid biosynthesis. This is Pentafunctional AROM polypeptide from Saccharomyces cerevisiae (strain ATCC 204508 / S288c) (Baker's yeast).